A 2046-amino-acid polypeptide reads, in one-letter code: Protein TIC 214 (2046 aa).

The next 6 helical transmembrane spans lie at 18–38 (VSGP…LPFG), 54–74 (LYGI…FLSM), 79–99 (IYAA…YTFC), 125–145 (ILSL…LLAN), 163–183 (ISFM…FINL), and 214–234 (TFSV…PLIF). Disordered stretches follow at residues 278–299 (DEDR…EDRS), 320–472 (ARSV…VPRE), and 1833–1898 (AKDS…EDEI). Basic and acidic residues-rich tracts occupy residues 322-335 (SVAE…EHRS), 344-368 (SVAE…RSVA), and 378-457 (AKKD…RSVA). Positions 1833-1866 (AKDSNANDINAKDSNANDINANDSNAKDSNANDI) are enriched in low complexity. Over residues 1882–1898 (NAKDSNADVPKKKEDEI) the composition is skewed to basic and acidic residues.

It belongs to the TIC214 family. As to quaternary structure, part of the Tic complex.

It localises to the plastid. Its subcellular location is the chloroplast inner membrane. Involved in protein precursor import into chloroplasts. May be part of an intermediate translocation complex acting as a protein-conducting channel at the inner envelope. This Pinus koraiensis (Korean pine) protein is Protein TIC 214.